The primary structure comprises 89 residues: LSPTFYATSXPNVXXTRDSVVEIGQLADTVAPVRGFDVIDNIKDMVALSGSHTIGQARQATRSPAQVDLSNTRGLLGQAGNDFALVDDK.

Residue histidine 52 coordinates heme. Residues threonine 53 and aspartate 68 each coordinate Ca(2+).

Heme b serves as cofactor. It depends on Ca(2+) as a cofactor.

The protein resides in the secreted. The catalysed reaction is 2 a phenolic donor + H2O2 = 2 a phenolic radical donor + 2 H2O. Removal of H(2)O(2), oxidation of toxic reductants, biosynthesis and degradation of lignin, suberization, auxin catabolism, response to environmental stresses such as wounding, pathogen attack and oxidative stress. These functions might be dependent on each isozyme/isoform in each plant tissue. Active against p-coumaryl alcohol, coniferyl alcohol and coniferyl aldehyde. This is Peroxidase from Ginkgo biloba (Ginkgo).